We begin with the raw amino-acid sequence, 339 residues long: UPF0324 membrane protein M6_Spy0799 (339 aa).

Helical transmembrane passes span 7 to 24 (KLPG…AWYL), 28 to 50 (FPII…FYEH), 57 to 79 (GISF…GLNL), 84 to 106 (AVGM…VAYG), 118 to 140 (ATLV…APVI), 150 to 172 (AISV…GQLL), 256 to 275 (FILF…SLGV), 290 to 307 (FIVM…LVKL), and 314 to 336 (AILL…QLSL).

This sequence belongs to the UPF0324 family.

The protein resides in the cell membrane. The protein is UPF0324 membrane protein M6_Spy0799 of Streptococcus pyogenes serotype M6 (strain ATCC BAA-946 / MGAS10394).